We begin with the raw amino-acid sequence, 1046 residues long: uncharacterized protein (1046 aa).

The span at 594 to 615 (LNSIPSDSSSSGSSRKSSPRGS) shows a compositional bias: low complexity. Residues 594–622 (LNSIPSDSSSSGSSRKSSPRGSPNLGEAP) form a disordered region.

This is an uncharacterized protein from Invertebrate iridescent virus 6 (IIV-6).